Consider the following 315-residue polypeptide: Porphobilinogen deaminase (315 aa).

An S-(dipyrrolylmethanemethyl)cysteine modification is found at C234.

This sequence belongs to the HMBS family. Monomer. It depends on dipyrromethane as a cofactor.

The enzyme catalyses 4 porphobilinogen + H2O = hydroxymethylbilane + 4 NH4(+). It functions in the pathway porphyrin-containing compound metabolism; protoporphyrin-IX biosynthesis; coproporphyrinogen-III from 5-aminolevulinate: step 2/4. Functionally, tetrapolymerization of the monopyrrole PBG into the hydroxymethylbilane pre-uroporphyrinogen in several discrete steps. This chain is Porphobilinogen deaminase (hemC), found in Mycobacterium leprae (strain TN).